Here is a 685-residue protein sequence, read N- to C-terminus: Putative protein FAR1-RELATED SEQUENCE 10 (685 aa).

Residues 69-161 (EYYSTFARKS…SNVHNHELLE (93 aa)) form the FAR1 domain. In terms of domain architecture, MULE spans 292 to 388 (VVVFDTSYRS…FMSHIVSKLA (97 aa)). The segment at 565–603 (GECCVIWNPENEEIQCSCKEFEHSGILCRHTLRVLTVKN) adopts an SWIM-type zinc-finger fold.

Belongs to the FHY3/FAR1 family.

This chain is Putative protein FAR1-RELATED SEQUENCE 10 (FRS10), found in Arabidopsis thaliana (Mouse-ear cress).